The primary structure comprises 1698 residues: Cullin-7 (1698 aa).

The segment at 315–357 is disordered; that stretch reads QASDRPRSSARSPGSIFQPQLADVSPGLPAAQAQPSFRRSRRF. Phosphoserine is present on Ser339. Residues 360–433 enclose the CPH domain; it reads RSEFASGNTY…HWHMLEILGF (74 aa). Positions 601 to 611 are enriched in basic and acidic residues; sequence SEDAAKVEAKE. The interval 601 to 623 is disordered; it reads SEDAAKVEAKEPPSQSPNTPLQR. The 180-residue stretch at 814-993 folds into the DOC domain; sequence PINIPFFDVF…HTRLFYMVRA (180 aa). The interval 1345–1370 is disordered; sequence GASGKEHKSEKEEEAGAAAVVDVAEG. A Glycyl lysine isopeptide (Lys-Gly) (interchain with G-Cter in NEDD8) cross-link involves residue Lys1576.

The protein belongs to the cullin family. Component of the 3M complex, composed of core components CUL7, CCDC8 and OBSL1. Component of the Cul7-RING(FBXW8) complex consisting of CUL7, RBX1, SKP1 and FBXW8. Within the Cul7-RING(FBXW8) complex interacts with FBXW8 and RBX1, but not with SKP1. Interacts with CUL1 (via the C-terminal domain); the interaction seems to be mediated by FBXW8; it is likely specific to FBXW8, but not other F-box proteins. Interacts (via the CPH domain) with p53/TP53; the interaction preferentially involves tetrameric and dimeric p53/TP53; this interaction recruits p53/TP53 for ubiquitination by neddylated CUL1-RBX1. The CUL7-CUL9 heterodimer seems to interact specifically with p53/TP53. Interacts with FBXW8; interaction is mutually exclusive of binding to CUL9 or p53/TP53. Interacts with CUL9; leading to inhibited CUL9 activity. Interacts with OBSL1. Interacts (as part of the 3M complex) with HDAC4 and HDAC5; it is negatively regulated by ANKRA2. In terms of assembly, (Microbial infection) Interacts with SV40 Large T antigen; this interaction seems to inhibit CUL7. In terms of processing, according to a report, may not be neddylated despite the conserved consensus site for neddylation at Lys-1576. Structural study of the Cul7-RING(FBXW8) reveals that both CUL7 and RBX1 are in orientations that are incompatible with neddylation. As to expression, highly expressed in fetal kidney and adult skeletal muscle. Also abundant in fetal brain, as well as in adult pancreas, kidney, placenta and heart. Detected in trophoblasts, lymphoblasts, osteoblasts, chondrocytes and skin fibroblasts.

It is found in the cytoplasm. The protein resides in the cytoskeleton. The protein localises to the microtubule organizing center. It localises to the centrosome. Its subcellular location is the perinuclear region. It is found in the golgi apparatus. It participates in protein modification; protein ubiquitination. Its function is as follows. Core component of the 3M and Cul7-RING(FBXW8) complexes, which mediate the ubiquitination and subsequent proteasomal degradation of target proteins. Core component of the 3M complex, a complex required to regulate microtubule dynamics and genome integrity. It is unclear how the 3M complex regulates microtubules, it could act by controlling the level of a microtubule stabilizer. The Cul7-RING(FBXW8) complex alone lacks ubiquitination activity and does not promote polyubiquitination and proteasomal degradation of p53/TP53. However it mediates recruitment of p53/TP53 for ubiquitination by neddylated CUL1-RBX1. Interaction with CUL9 is required to inhibit CUL9 activity and ubiquitination of BIRC5. The Cul7-RING(FBXW8) complex also mediates ubiquitination and consequent degradation of target proteins such as GORASP1, IRS1 and MAP4K1/HPK1. Ubiquitination of GORASP1 regulates Golgi morphogenesis and dendrite patterning in brain. Mediates ubiquitination and degradation of IRS1 in a mTOR-dependent manner: the Cul7-RING(FBXW8) complex recognizes and binds IRS1 previously phosphorylated by S6 kinase (RPS6KB1 or RPS6KB2). The Cul7-RING(FBXW8) complex also mediates ubiquitination of MAP4K1/HPK1: recognizes and binds autophosphorylated MAP4K1/HPK1, leading to its degradation, thereby affecting cell proliferation and differentiation. Acts as a regulator in trophoblast cell epithelial-mesenchymal transition and placental development. While the Cul7-RING(FBXW8) and the 3M complexes are associated and involved in common processes, CUL7 and the Cul7-RING(FBXW8) complex may have additional functions. Probably plays a role in the degradation of proteins involved in endothelial proliferation and/or differentiation. The polypeptide is Cullin-7 (CUL7) (Homo sapiens (Human)).